We begin with the raw amino-acid sequence, 509 residues long: Photosystem II CP47 reaction center protein (509 aa).

6 helical membrane passes run 21–36, 101–115, 140–156, 203–218, 237–252, and 457–472; these read AVHLMHTALVAGWAGS, IGLSGLLFLAAIWHW, GIHLFLSGLLCFGFGAF, IAAGIVGILAGLFHLS, VLSSSISAVFFAAFIV, and SFALIFFFGHLWHGGR.

This sequence belongs to the PsbB/PsbC family. PsbB subfamily. PSII is composed of 1 copy each of membrane proteins PsbA, PsbB, PsbC, PsbD, PsbE, PsbF, PsbH, PsbI, PsbJ, PsbK, PsbL, PsbM, PsbT, PsbX, PsbY, PsbZ, Psb30/Ycf12, at least 3 peripheral proteins of the oxygen-evolving complex and a large number of cofactors. It forms dimeric complexes. Binds multiple chlorophylls. PSII binds additional chlorophylls, carotenoids and specific lipids. is required as a cofactor.

The protein localises to the plastid. It localises to the cyanelle thylakoid membrane. Its function is as follows. One of the components of the core complex of photosystem II (PSII). It binds chlorophyll and helps catalyze the primary light-induced photochemical processes of PSII. PSII is a light-driven water:plastoquinone oxidoreductase, using light energy to abstract electrons from H(2)O, generating O(2) and a proton gradient subsequently used for ATP formation. The sequence is that of Photosystem II CP47 reaction center protein from Cyanophora paradoxa.